The chain runs to 398 residues: Lipase member K (398 aa).

Positions 1–19 (MWWLLATTCCVLLSGPIDG) are cleaved as a signal peptide. The AB hydrolase-1 domain occupies 78–377 (VVYLQHGLIA…HYNHMDFYLG (300 aa)). Residue Ser171 is the Nucleophile of the active site. A disulfide bond links Cys245 and Cys254. 2 N-linked (GlcNAc...) asparagine glycosylation sites follow: Asn270 and Asn326. Active-site charge relay system residues include Asp342 and His371.

This sequence belongs to the AB hydrolase superfamily. Lipase family.

The protein localises to the secreted. Functionally, plays a highly specific role in the last step of keratinocyte differentiation. May have an essential function in lipid metabolism of the most differentiated epidermal layers. This is Lipase member K (Lipk) from Mus musculus (Mouse).